Reading from the N-terminus, the 920-residue chain is 2-oxoadipate dehydrogenase complex component E1 (920 aa).

2 positions are modified to N6-succinyllysine: lysine 183 and lysine 188. Positions 299-318 (GKTRGRQQSQEDGDYSPNGS) are disordered. Lysine 800 and lysine 818 each carry N6-succinyllysine.

Belongs to the alpha-ketoglutarate dehydrogenase family. The 2-oxoadipate dehydrogenase complex is composed of OADH (2-oxoadipate dehydrogenase; E1a), DLST (dihydrolipoamide succinyltransferase; E2) and DLD (dihydrolipoamide dehydrogenase; E3). E1a functional unit is a dimer. Thiamine diphosphate serves as cofactor.

Its subcellular location is the mitochondrion. The enzyme catalyses N(6)-[(R)-lipoyl]-L-lysyl-[protein] + 2-oxoadipate + H(+) = N(6)-[(R)-S(8)-glutaryldihydrolipoyl]-L-lysyl-[protein] + CO2. It functions in the pathway amino-acid degradation. In terms of biological role, 2-oxoadipate dehydrogenase (E1a) component of the 2-oxoadipate dehydrogenase complex (OADHC). Participates in the first step, rate limiting for the overall conversion of 2-oxoadipate (alpha-ketoadipate) to glutaryl-CoA and CO(2) catalyzed by the whole OADHC. Catalyzes the irreversible decarboxylation of 2-oxoadipate via the thiamine diphosphate (ThDP) cofactor and subsequent transfer of the decarboxylated acyl intermediate on an oxidized dihydrolipoyl group that is covalently amidated to the E2 enzyme (dihydrolipoyllysine-residue succinyltransferase or DLST). Can catalyze the decarboxylation of 2-oxoglutarate in vitro, but at a much lower rate than 2-oxoadipate. Responsible for the last step of L-lysine, L-hydroxylysine and L-tryptophan catabolism with the common product being 2-oxoadipate. The chain is 2-oxoadipate dehydrogenase complex component E1 (Dhtkd1) from Rattus norvegicus (Rat).